We begin with the raw amino-acid sequence, 137 residues long: Putative pre-16S rRNA nuclease (137 aa).

It belongs to the YqgF nuclease family.

The protein localises to the cytoplasm. In terms of biological role, could be a nuclease involved in processing of the 5'-end of pre-16S rRNA. This is Putative pre-16S rRNA nuclease from Bacillus cereus (strain 03BB102).